Consider the following 287-residue polypeptide: 4-hydroxybenzoate octaprenyltransferase (287 aa).

6 helical membrane-spanning segments follow: residues 41–61 (WPLL…GCAM), 89–109 (WEAV…ILPL), 133–153 (FFAI…PMAF), 158–178 (DTVP…SVAY), 202–224 (FGRF…YVWI), and 266–286 (HNNW…LLAG).

Belongs to the UbiA prenyltransferase family. Mg(2+) serves as cofactor.

The protein localises to the cell inner membrane. The enzyme catalyses all-trans-octaprenyl diphosphate + 4-hydroxybenzoate = 4-hydroxy-3-(all-trans-octaprenyl)benzoate + diphosphate. It participates in cofactor biosynthesis; ubiquinone biosynthesis. Catalyzes the prenylation of para-hydroxybenzoate (PHB) with an all-trans polyprenyl group. Mediates the second step in the final reaction sequence of ubiquinone-8 (UQ-8) biosynthesis, which is the condensation of the polyisoprenoid side chain with PHB, generating the first membrane-bound Q intermediate 3-octaprenyl-4-hydroxybenzoate. The polypeptide is 4-hydroxybenzoate octaprenyltransferase (Burkholderia cenocepacia (strain HI2424)).